Consider the following 219-residue polypeptide: Protein-L-isoaspartate O-methyltransferase 2 (219 aa).

The active site involves Ser66.

It belongs to the methyltransferase superfamily. L-isoaspartyl/D-aspartyl protein methyltransferase family.

The protein resides in the cytoplasm. The enzyme catalyses [protein]-L-isoaspartate + S-adenosyl-L-methionine = [protein]-L-isoaspartate alpha-methyl ester + S-adenosyl-L-homocysteine. Catalyzes the methyl esterification of L-isoaspartyl residues in peptides and proteins that result from spontaneous decomposition of normal L-aspartyl and L-asparaginyl residues. It plays a role in the repair and/or degradation of damaged proteins. This Marinobacter nauticus (strain ATCC 700491 / DSM 11845 / VT8) (Marinobacter aquaeolei) protein is Protein-L-isoaspartate O-methyltransferase 2.